The following is a 608-amino-acid chain: Bifunctional dihydrofolate reductase-thymidylate synthase (608 aa).

Positions 10–228 (DIYAICACCK…TTLDFIIYKK (219 aa)) constitute a DHFR domain. A substrate-binding site is contributed by 14 to 15 (IC). Ala-16 contacts NADP(+). Position 31 (Val-31) interacts with substrate. 39–45 (GLGNKGV) is an NADP(+) binding site. Substrate-binding residues include Asp-54 and Asn-108. NADP(+)-binding positions include 106–108 (RTN), 128–130 (SRT), and Asn-144. Residues Ile-164, Tyr-170, and Thr-185 each contribute to the substrate site. 165–172 (GGSVVYQE) provides a ligand contact to NADP(+). Residues 322 to 608 (YHPEYQYLNI…HEKISMDMAA (287 aa)) are thymidylate synthase. DUMP is bound at residue Arg-345. Residue Cys-490 is part of the active site. Residues His-491, 509–513 (QRSCD), Asn-521, and 551–553 (HVY) contribute to the dUMP site.

In the N-terminal section; belongs to the dihydrofolate reductase family. The protein in the C-terminal section; belongs to the thymidylate synthase family. In terms of assembly, homodimer.

The catalysed reaction is (6S)-5,6,7,8-tetrahydrofolate + NADP(+) = 7,8-dihydrofolate + NADPH + H(+). It carries out the reaction dUMP + (6R)-5,10-methylene-5,6,7,8-tetrahydrofolate = 7,8-dihydrofolate + dTMP. It functions in the pathway cofactor biosynthesis; tetrahydrofolate biosynthesis; 5,6,7,8-tetrahydrofolate from 7,8-dihydrofolate: step 1/1. In terms of biological role, bifunctional enzyme. Involved in de novo dTMP biosynthesis. Key enzyme in folate metabolism. Catalyzes an essential reaction for de novo glycine and purine synthesis, DNA precursor synthesis, and for the conversion of dUMP to dTMP. The protein is Bifunctional dihydrofolate reductase-thymidylate synthase of Plasmodium falciparum (isolate K1 / Thailand).